The sequence spans 237 residues: Demethylmenaquinone methyltransferase (237 aa).

S-adenosyl-L-methionine-binding positions include threonine 58, aspartate 79, and 106-107 (NA).

This sequence belongs to the class I-like SAM-binding methyltransferase superfamily. MenG/UbiE family.

The enzyme catalyses a 2-demethylmenaquinol + S-adenosyl-L-methionine = a menaquinol + S-adenosyl-L-homocysteine + H(+). Its pathway is quinol/quinone metabolism; menaquinone biosynthesis; menaquinol from 1,4-dihydroxy-2-naphthoate: step 2/2. Its function is as follows. Methyltransferase required for the conversion of demethylmenaquinol (DMKH2) to menaquinol (MKH2). This is Demethylmenaquinone methyltransferase from Anoxybacillus flavithermus (strain DSM 21510 / WK1).